A 141-amino-acid polypeptide reads, in one-letter code: Putative RING-H2 finger protein ATL62 (141 aa).

Residues 14 to 32 (FFAILTVFYSIFRCCLAYC) traverse the membrane as a helical segment. The RING-type; degenerate zinc-finger motif lies at 79 to 121 (CVVCLSKFIDEDKARVLPSCNHCFHFDFTDTWLHSDYTCPNCR).

Belongs to the RING-type zinc finger family. ATL subfamily.

It is found in the membrane. It catalyses the reaction S-ubiquitinyl-[E2 ubiquitin-conjugating enzyme]-L-cysteine + [acceptor protein]-L-lysine = [E2 ubiquitin-conjugating enzyme]-L-cysteine + N(6)-ubiquitinyl-[acceptor protein]-L-lysine.. Its pathway is protein modification; protein ubiquitination. This is Putative RING-H2 finger protein ATL62 (ATL62) from Arabidopsis thaliana (Mouse-ear cress).